The following is an 834-amino-acid chain: MRHQNKNHKQRPSFLSQFLVILWFRTKLSIRDKKFFILGILLPMISIGASIILNNVLVFGPGSDFQKTNNNLNNNNIFITPKTLNSQQETLINTMKLQYSLNYTYLDDDTDLPNYIENKSLSSLDYGISFIGSNGINIYYNSSIESIPSFVHSFFISLFKINGINLQLNETITVLSSEVTFDAFYLLMPMILQYGFVFFIPYFAILIVTDRDKGFKNHLILNSLRTSVYWFGNLVFDYLIFLIPTIIGWILLYSFKIDGIYSDNSGKSFLLFLTFGISAIPFGFVLQFIFDKEETANKWLYPFTSIVTSIPSALISVAFPTSTPLIVELLLSILPTFSFCNGLKALTYNNSSTVSYTILIQLLSGLIYLILIYFIDNYKKPKKNEIINDEDSESIINNQIIEDNDVLNEKEKIKRLVRDGGGNNNNNKKNNSYPKIVVDGIYKQFIQPKPTLDKPSIIERCSGGTKATKKNSIIKKAVDGIWFSVEKNEIFGLLGPNGSGKSTCLNLLTGLLKADQGDGYLSGKSIDKDKDVFQSIGSCAQNDILFENLTIYEHLYLFSRLKSITTTKSELEDEIDFYINKFSIQSFKNKKSSDLSGGTKRKLSVACCLIGDPQVVLLDEPSTSLDPISRNELHSLIDELKVNKSIIMTTHSINEINQCCNRVAIMVDGKIRCIGTPNHLKHKYGSGYTIDIIPNNYLNNSYEIHNFMAQTFPNATRVERLGRFISYDLPSQNQQSLSTIFRILQSNKQRLQILDFSASSSSLEKVFLKFANLQEEINKQQTNNKSNIINNNNNNNNNNNNNNNNNNNNNNNNNNNNNNNNNTNNNTNNNQLIN.

The next 7 membrane-spanning stretches (helical) occupy residues 35–55, 188–208, 235–255, 269–289, 297–319, 324–346, and 355–375; these read FFIL…ILNN, MPMI…ILIV, VFDY…LYSF, FLLF…LQFI, NKWL…SVAF, PLIV…LKAL, and SYTI…IYFI. In terms of domain architecture, ABC transporter spans 452–693; the sequence is LDKPSIIERC…YGSGYTIDII (242 aa). 495-502 is an ATP binding site; that stretch reads GPNGSGKS. Over residues 779–789 the composition is skewed to polar residues; sequence KQQTNNKSNII. Positions 779 to 834 are disordered; the sequence is KQQTNNKSNIINNNNNNNNNNNNNNNNNNNNNNNNNNNNNNNNNTNNNTNNNQLIN. Residues 790 to 834 are compositionally biased toward low complexity; it reads NNNNNNNNNNNNNNNNNNNNNNNNNNNNNNNNNTNNNTNNNQLIN.

Belongs to the ABC transporter superfamily. ABCA family.

It localises to the membrane. The polypeptide is ABC transporter A family member 11 (abcA11) (Dictyostelium discoideum (Social amoeba)).